The primary structure comprises 364 residues: Zinc finger protein CONSTANS-LIKE 12 (364 aa).

Residues C5, C8, C28, and H33 each contribute to the Zn(2+) site. The B box-type 1; atypical zinc-finger motif lies at 5–47 (CDHCATSQALIYCKSDLAKLCLNCDVHVHSANPLSHRHIRSLI). Residues 48-88 (CEKCFSQPAAIRCLDEKVSYCQGCHWHESNCSELGHRVQSL) form a B box-type 2; degenerate zinc finger. The region spanning 280–322 (QDCGMSPGFIMSEAPWETNFEVSCPQARNEAKLRYKEKKLKRS) is the CCT domain.

The protein belongs to the CONSTANS family.

The protein resides in the nucleus. In Arabidopsis thaliana (Mouse-ear cress), this protein is Zinc finger protein CONSTANS-LIKE 12 (COL12).